Here is a 314-residue protein sequence, read N- to C-terminus: Dihydropteroate synthase (314 aa).

In terms of domain architecture, Pterin-binding spans 10–294 (TVICGIINVT…DVASHRMAVE (285 aa)). Residue Asn17 coordinates Mg(2+). Residues Asp91, Asn110, Asp201, Lys237, and 282–284 (RVH) each bind (7,8-dihydropterin-6-yl)methyl diphosphate.

The protein belongs to the DHPS family. As to quaternary structure, homodimer. It depends on Mg(2+) as a cofactor.

It carries out the reaction (7,8-dihydropterin-6-yl)methyl diphosphate + 4-aminobenzoate = 7,8-dihydropteroate + diphosphate. It participates in cofactor biosynthesis; tetrahydrofolate biosynthesis; 7,8-dihydrofolate from 2-amino-4-hydroxy-6-hydroxymethyl-7,8-dihydropteridine diphosphate and 4-aminobenzoate: step 1/2. With respect to regulation, is potently inhibited by sulfonamides, with Ki values between 25 nM and 850 nM. Its function is as follows. Catalyzes the condensation of para-aminobenzoate (pABA) with 6-hydroxymethyl-7,8-dihydropterin diphosphate (DHPt-PP) to form 7,8-dihydropteroate, the immediate precursor of folate derivatives. In terms of biological role, is the target for the sulfonamide group of antimicrobial drugs. Sulfonamide drugs act as pABA analogs, they inhibit the reaction by acting as alternative substrates, leading to a 'dead end' sulfa-pterin product. This Streptococcus pneumoniae (strain ATCC BAA-255 / R6) protein is Dihydropteroate synthase (sulA).